Reading from the N-terminus, the 236-residue chain is Probable pseudouridine-5'-phosphatase YKL033W-A (236 aa).

This sequence belongs to the HAD-like hydrolase superfamily.

The enzyme catalyses XMP + H2O = xanthosine + phosphate. The catalysed reaction is psi-UMP + H2O = pseudouridine + phosphate. In terms of biological role, nucleotidase with XMP as the best in vitro substrate. Low catalytic efficiencies of YKL033W-A observed with XMP and other substrates suggest that these could be secondary activities for this protein, and its primary substrate is not yet identified. May possess pseudouridine 5'-phosphatase activity and together with dTTP/UTP pyrophosphatase YOR111W might constitute a pathway for the detoxification of pseudouridine 5'-triphosphate (Psi-UTP) and -monophosphate (Psi-UMP). The chain is Probable pseudouridine-5'-phosphatase YKL033W-A from Saccharomyces cerevisiae (strain ATCC 204508 / S288c) (Baker's yeast).